The sequence spans 304 residues: Acetyl-coenzyme A carboxylase carboxyl transferase subunit beta (304 aa).

One can recognise a CoA carboxyltransferase N-terminal domain in the interval 23–292; that stretch reads VWTKCDSCGQ…PNPEAPREGV (270 aa). Zn(2+) is bound by residues cysteine 27, cysteine 30, cysteine 46, and cysteine 49. The segment at 27–49 adopts a C4-type zinc-finger fold; sequence CDSCGQVLYRAELERNLEVCPKC. The interval 284–304 is disordered; sequence NPEAPREGVVVPPVPDQEPEA. A compositionally biased stretch (pro residues) spans 295–304; the sequence is PPVPDQEPEA.

Belongs to the AccD/PCCB family. Acetyl-CoA carboxylase is a heterohexamer composed of biotin carboxyl carrier protein (AccB), biotin carboxylase (AccC) and two subunits each of ACCase subunit alpha (AccA) and ACCase subunit beta (AccD). Zn(2+) serves as cofactor.

The protein localises to the cytoplasm. The catalysed reaction is N(6)-carboxybiotinyl-L-lysyl-[protein] + acetyl-CoA = N(6)-biotinyl-L-lysyl-[protein] + malonyl-CoA. Its pathway is lipid metabolism; malonyl-CoA biosynthesis; malonyl-CoA from acetyl-CoA: step 1/1. Component of the acetyl coenzyme A carboxylase (ACC) complex. Biotin carboxylase (BC) catalyzes the carboxylation of biotin on its carrier protein (BCCP) and then the CO(2) group is transferred by the transcarboxylase to acetyl-CoA to form malonyl-CoA. The chain is Acetyl-coenzyme A carboxylase carboxyl transferase subunit beta from Escherichia coli O6:K15:H31 (strain 536 / UPEC).